Consider the following 66-residue polypeptide: UPF0337 protein bsl1473 (66 aa).

The protein belongs to the UPF0337 (CsbD) family.

The protein is UPF0337 protein bsl1473 of Bradyrhizobium diazoefficiens (strain JCM 10833 / BCRC 13528 / IAM 13628 / NBRC 14792 / USDA 110).